A 461-amino-acid polypeptide reads, in one-letter code: Cysteine--tRNA ligase (461 aa).

Zn(2+) is bound at residue C28. The 'HIGH' region signature appears at 30–40 (ITIYDLCHIGH). Residues C209, H234, and E238 each coordinate Zn(2+). Residues 266-270 (KMSKS) carry the 'KMSKS' region motif. K269 lines the ATP pocket.

The protein belongs to the class-I aminoacyl-tRNA synthetase family. In terms of assembly, monomer. It depends on Zn(2+) as a cofactor.

The protein resides in the cytoplasm. It carries out the reaction tRNA(Cys) + L-cysteine + ATP = L-cysteinyl-tRNA(Cys) + AMP + diphosphate. This is Cysteine--tRNA ligase from Yersinia pestis bv. Antiqua (strain Antiqua).